Reading from the N-terminus, the 143-residue chain is Hemoglobin subunit alpha-1 (143 aa).

N-acetylserine is present on Ser2. A Globin domain is found at 2–143 (SLSAKDKATV…LALALCEKYR (142 aa)). His60 provides a ligand contact to O2. His89 is a heme b binding site.

The protein belongs to the globin family. In terms of assembly, hb 1 is a heterotetramer of two alpha-1 and two beta-1 chains. As to expression, red blood cells.

In terms of biological role, involved in oxygen transport from gills to the various peripheral tissues. The polypeptide is Hemoglobin subunit alpha-1 (hba1) (Boreogadus saida (Polar cod)).